The following is a 599-amino-acid chain: MSVDSSSTHRHRSVAARLVRLAAAGAAVIAAVGTAAAWAHAGAVQHRCIHDAMQARVRQSVARHHTAPGAVSAVGLPYVTLDTAAAADRRPGSAPTVVRAANWGALRIAVSTEDLTDPAYHCARVGQHIKRRLGGVDICTAEDILTDEKRDILVKHLIPQALQLHTERLKVRQVQDKWKVTGMGDDVCSDFKVPPAHITDGLSNTDFVMYVASVPSEEGVLAWATTCQVFSDGHPAVGVINIPAANIASRYDQLVTRVVTHEMAHALGFSVGFFEGARILESISNVRHKDFDVPVINSSTAVAKAREQYGCDTLEYLEIEDQGGAGSAGSHIKMRNAQDELMAPAAAAGYYSALTMAIFQDLGFYQADFSKAEVMPWGRNAGCAFLSEKCMERNITKWPAMFCNENEVTMRCPTSRLSLGKCGVTRHPDLPPYWQYFTDPSLAGISAFMDCCPVVEPYGDGSCAQRASEAGAPFKGFNVFSDAARCIDGAFRPKTSHGIIKSYAGLCANVRCDTATRTYSVQVHGGSGYANCTPGLRVELSTVSSAFEEGGYITCPPYVEVCQGNVQAAKDGGNAAAGRRGPRAAATALLVAALLAVAL.

A signal peptide spans 1-39; sequence MSVDSSSTHRHRSVAARLVRLAAAGAAVIAAVGTAAAWA. The propeptide at 40 to 97 is activation peptide; that stretch reads HAGAVQHRCIHDAMQARVRQSVARHHTAPGAVSAVGLPYVTLDTAAAADRRPGSAPTV. Intrachain disulfides connect Cys122/Cys139 and Cys188/Cys227. His261 serves as a coordination point for Zn(2+). Glu262 is an active-site residue. A Zn(2+)-binding site is contributed by His265. Asn297 carries an N-linked (GlcNAc...) asparagine glycan. 7 disulfides stabilise this stretch: Cys311–Cys383, Cys390–Cys452, Cys403–Cys422, Cys412–Cys486, Cys463–Cys507, Cys512–Cys562, and Cys532–Cys555. His331 serves as a coordination point for Zn(2+). N-linked (GlcNAc...) asparagine glycosylation occurs at Asn394. The GPI-anchor amidated asparagine moiety is linked to residue Asn574. The propeptide at 575-599 is removed in mature form; it reads AAAGRRGPRAAATALLVAALLAVAL.

It belongs to the peptidase M8 family. The cofactor is Zn(2+).

The protein localises to the cell membrane. The catalysed reaction is Preference for hydrophobic residues at P1 and P1' and basic residues at P2' and P3'. A model nonapeptide is cleaved at -Ala-Tyr-|-Leu-Lys-Lys-.. Functionally, has an integral role during the infection of macrophages in the mammalian host. The chain is Leishmanolysin (gp63) from Leishmania chagasi.